A 132-amino-acid polypeptide reads, in one-letter code: MSAATDQILEQLKSLTLLEASELVKQIEEAFGVSAAAPVGGGMMMMAPGGAAPAAAEPEEEKTEFDVVLEDVPADKKIAILKVVRAITGLGLKEAKDLVESAPKPIKEATNKDDAESIKKQLEEAGAKASVK.

The segment covering 102 to 126 (APKPIKEATNKDDAESIKKQLEEAG) has biased composition (basic and acidic residues). The tract at residues 102-132 (APKPIKEATNKDDAESIKKQLEEAGAKASVK) is disordered.

Belongs to the bacterial ribosomal protein bL12 family. Homodimer. Part of the ribosomal stalk of the 50S ribosomal subunit. Forms a multimeric L10(L12)X complex, where L10 forms an elongated spine to which 2 to 4 L12 dimers bind in a sequential fashion. Binds GTP-bound translation factors.

Functionally, forms part of the ribosomal stalk which helps the ribosome interact with GTP-bound translation factors. Is thus essential for accurate translation. The sequence is that of Large ribosomal subunit protein bL12 from Rippkaea orientalis (strain PCC 8801 / RF-1) (Cyanothece sp. (strain PCC 8801)).